The primary structure comprises 110 residues: MSHKVTKAHNGATLTVAVGELVEIQLPSNPTTGFAWYFEGGTKESPNESMFTVENKYFPPDSKLLGAGGTEHFHVTVKAAGTHAVNLTYMRPWTGPSHDSERFTVYLKAN.

Residues 29–34 (NPTTGF) carry the BC loop motif. A DE loop motif is present at residues 59–68 (PPDSKLLGAG). The FG loop motif lies at 91 to 100 (RPWTGPSHDS).

Belongs to the protease inhibitor I42 family. As to quaternary structure, interacts with cruzipain.

It is found in the flagellar pocket. It localises to the cytoplasmic vesicle. The protein localises to the cell surface. Its function is as follows. Cysteine protease inhibitor. Inhibits cysteine protease cruzipain. In Trypanosoma cruzi, this protein is Chagasin (cha).